The sequence spans 312 residues: MANYLDFEKSIKQIDDDISSAKIRGDDSAVEILKKNLEKEINKVYKNLSEFQRLQLARHPDRPYSLDYVRALLKNYYEIHGDRVFRDDPSIVCFLGYIADKKIVVIAEQKGRGTKYKLKRNFGMPHPEGYRKALRVAKLAEKFSIPIIFFIDTPGAYPGIGAEERGQSEAIARNLFEFSDIKTPTIAIVIGEGGSGGALAIGVADKLAMLSNSIFSVISPEGCAAILWKDPDKSEAATKALKITAEELKELNLIDDVIKEPKMGAHRDKDAAAKAVGNYIIEKLNELEKIPLDEILRKRKEKILNTGVFEEL.

The 262-residue stretch at 25-286 (GDDSAVEILK…GNYIIEKLNE (262 aa)) folds into the CoA carboxyltransferase C-terminal domain.

It belongs to the AccA family. In terms of assembly, acetyl-CoA carboxylase is a heterohexamer composed of biotin carboxyl carrier protein (AccB), biotin carboxylase (AccC) and two subunits each of ACCase subunit alpha (AccA) and ACCase subunit beta (AccD).

It is found in the cytoplasm. It carries out the reaction N(6)-carboxybiotinyl-L-lysyl-[protein] + acetyl-CoA = N(6)-biotinyl-L-lysyl-[protein] + malonyl-CoA. The protein operates within lipid metabolism; malonyl-CoA biosynthesis; malonyl-CoA from acetyl-CoA: step 1/1. Its function is as follows. Component of the acetyl coenzyme A carboxylase (ACC) complex. First, biotin carboxylase catalyzes the carboxylation of biotin on its carrier protein (BCCP) and then the CO(2) group is transferred by the carboxyltransferase to acetyl-CoA to form malonyl-CoA. This Campylobacter hominis (strain ATCC BAA-381 / DSM 21671 / CCUG 45161 / LMG 19568 / NCTC 13146 / CH001A) protein is Acetyl-coenzyme A carboxylase carboxyl transferase subunit alpha.